The primary structure comprises 103 residues: Signal recognition particle 19 kDa protein (103 aa).

It belongs to the SRP19 family. Part of the signal recognition particle protein translocation system, which is composed of SRP and FtsY. Archaeal SRP consists of a 7S RNA molecule of 300 nucleotides and two protein subunits: SRP54 and SRP19.

It localises to the cytoplasm. Functionally, involved in targeting and insertion of nascent membrane proteins into the cytoplasmic membrane. Binds directly to 7S RNA and mediates binding of the 54 kDa subunit of the SRP. In Hyperthermus butylicus (strain DSM 5456 / JCM 9403 / PLM1-5), this protein is Signal recognition particle 19 kDa protein.